The sequence spans 357 residues: Type II methyltransferase M1.HgaI (357 aa).

An SAM-dependent MTase C5-type domain is found at 5 to 357 (IMGLSLFSSA…NITREIFNEN (353 aa)). Cysteine 83 is a catalytic residue.

Belongs to the class I-like SAM-binding methyltransferase superfamily. C5-methyltransferase family.

The catalysed reaction is a 2'-deoxycytidine in DNA + S-adenosyl-L-methionine = a 5-methyl-2'-deoxycytidine in DNA + S-adenosyl-L-homocysteine + H(+). Its function is as follows. A methylase that recognizes DNA with the sequence 5'-GCGTC-3', methylates C-2, and protects the DNA from cleavage by the HgaI endonuclease. The sequence is that of Type II methyltransferase M1.HgaI (hgaIAM) from Avibacterium volantium (Pasteurella volantium).